The sequence spans 210 residues: Thymidylate kinase (210 aa).

Residue Gly-10 to Ser-17 coordinates ATP.

It belongs to the thymidylate kinase family.

The enzyme catalyses dTMP + ATP = dTDP + ADP. In terms of biological role, phosphorylation of dTMP to form dTDP in both de novo and salvage pathways of dTTP synthesis. This Pseudomonas syringae pv. tomato (strain ATCC BAA-871 / DC3000) protein is Thymidylate kinase.